We begin with the raw amino-acid sequence, 337 residues long: Anthranilate phosphoribosyltransferase (337 aa).

5-phospho-alpha-D-ribose 1-diphosphate is bound by residues glycine 80, 83–84 (GD), threonine 88, 90–93 (NIST), 108–116 (KHGNRAVSS), and serine 120. Position 80 (glycine 80) interacts with anthranilate. Serine 92 lines the Mg(2+) pocket. An anthranilate-binding site is contributed by asparagine 111. Arginine 166 is an anthranilate binding site. Positions 224 and 225 each coordinate Mg(2+).

It belongs to the anthranilate phosphoribosyltransferase family. As to quaternary structure, homodimer. It depends on Mg(2+) as a cofactor.

The enzyme catalyses N-(5-phospho-beta-D-ribosyl)anthranilate + diphosphate = 5-phospho-alpha-D-ribose 1-diphosphate + anthranilate. Its pathway is amino-acid biosynthesis; L-tryptophan biosynthesis; L-tryptophan from chorismate: step 2/5. In terms of biological role, catalyzes the transfer of the phosphoribosyl group of 5-phosphorylribose-1-pyrophosphate (PRPP) to anthranilate to yield N-(5'-phosphoribosyl)-anthranilate (PRA). This chain is Anthranilate phosphoribosyltransferase, found in Anaeromyxobacter dehalogenans (strain 2CP-1 / ATCC BAA-258).